Reading from the N-terminus, the 353-residue chain is Nif-specific regulatory protein (353 aa).

In terms of domain architecture, Sigma-54 factor interaction spans 12–240; it reads IVGESAALKE…LQNCTQRTAT (229 aa). ATP is bound by residues 40–47 and 103–112; these read GESGTGKE and AHGGTLLLDE. The segment at residues 325–344 is a DNA-binding region (H-T-H motif); it reads QAKAARLLGRTPRQVGYSLR.

As to quaternary structure, interacts with sigma-54.

Required for activation of most nif operons, which are directly involved in nitrogen fixation. This is Nif-specific regulatory protein (nifA) from Rhizobium leguminosarum bv. trifolii.